Consider the following 329-residue polypeptide: Transcription factor MYB2 (329 aa).

HTH myb-type domains lie at 17–69 (GGDL…LNYL) and 70–124 (RPDL…QKHA). 2 consecutive DNA-binding regions (H-T-H motif) follow at residues 45–69 (WNSLARSAGLKRTGKSCRLRWLNYL) and 97–120 (WSKIAQHLPGRTDNEIKNYWRTRV). Composition is skewed to low complexity over residues 155–166 (AAAGQQQQQEGG) and 217–235 (LSSTTAGSSSLSTDSGAGA). Disordered regions lie at residues 155–189 (AAAGQQQQQEGGTDTPPLSWQHGGSDGLYESPELP) and 206–242 (GAQSGGTPAPELSSTTAGSSSLSTDSGAGAQPSWPTQ).

As to expression, highly expressed in leaves. Expressed in roots and shoots. Expressed at low levels in flowers.

The protein resides in the nucleus. In terms of biological role, transcription factor involved in abiotic stress responses. Plays a regulatory role in tolerance to salt, cold, and drought stresses. Positively regulates the expression of genes involved in proline synthesis and transport, and genes involved in reactive oxygen species (ROS) scavenging such as peroxidase, superoxide dismutase and catalase during salt stress. Transactivates stress-related genes, including LEA3, RAB16A and DREB2A during salt stress. In Oryza sativa subsp. japonica (Rice), this protein is Transcription factor MYB2.